Here is a 258-residue protein sequence, read N- to C-terminus: Imidazole glycerol phosphate synthase subunit HisF (258 aa).

Residues Asp-11 and Asp-130 contribute to the active site.

It belongs to the HisA/HisF family. Heterodimer of HisH and HisF.

It is found in the cytoplasm. The catalysed reaction is 5-[(5-phospho-1-deoxy-D-ribulos-1-ylimino)methylamino]-1-(5-phospho-beta-D-ribosyl)imidazole-4-carboxamide + L-glutamine = D-erythro-1-(imidazol-4-yl)glycerol 3-phosphate + 5-amino-1-(5-phospho-beta-D-ribosyl)imidazole-4-carboxamide + L-glutamate + H(+). Its pathway is amino-acid biosynthesis; L-histidine biosynthesis; L-histidine from 5-phospho-alpha-D-ribose 1-diphosphate: step 5/9. In terms of biological role, IGPS catalyzes the conversion of PRFAR and glutamine to IGP, AICAR and glutamate. The HisF subunit catalyzes the cyclization activity that produces IGP and AICAR from PRFAR using the ammonia provided by the HisH subunit. This is Imidazole glycerol phosphate synthase subunit HisF from Xanthomonas campestris pv. campestris (strain B100).